Here is a 718-residue protein sequence, read N- to C-terminus: Acetolactate synthase, mitochondrial (718 aa).

2 disordered regions span residues 1-53 (MLTR…YDTP) and 75-99 (QSSA…QAAP). Polar residues predominate over residues 32–45 (RYSNNIHTSSTQNA). Residues 76 to 99 (SSASTAAASPAVRPQPAQHFQAAP) show a composition bias toward low complexity. Glutamate 173 contacts thiamine diphosphate. Residue arginine 275 coordinates FAD. The tract at residues 301–326 (VQPGHSPYLPSNPLNPSSQPSDPLPG) is disordered. Residues 306–325 (SPYLPSNPLNPSSQPSDPLP) show a composition bias toward low complexity. FAD is bound by residues 397–418 (HGSA…LGVR) and 449–468 (EIQP…VLGD). Residues 541–621 (QHQMWACQYY…VKVLLFNNEF (81 aa)) are thiamine pyrophosphate binding. Mg(2+) contacts are provided by aspartate 592 and asparagine 619.

It belongs to the TPP enzyme family. Mg(2+) is required as a cofactor. It depends on thiamine diphosphate as a cofactor.

The protein localises to the mitochondrion. It carries out the reaction 2 pyruvate + H(+) = (2S)-2-acetolactate + CO2. The protein operates within amino-acid biosynthesis; L-isoleucine biosynthesis; L-isoleucine from 2-oxobutanoate: step 1/4. Its pathway is amino-acid biosynthesis; L-valine biosynthesis; L-valine from pyruvate: step 1/4. The sequence is that of Acetolactate synthase, mitochondrial (ILV2) from Cryptococcus neoformans var. grubii serotype A (strain H99 / ATCC 208821 / CBS 10515 / FGSC 9487) (Filobasidiella neoformans var. grubii).